The following is a 358-amino-acid chain: Myb family transcription factor IPN2 (358 aa).

A disordered region spans residues 1–20; sequence MERMFPPKKPSTMNSHDRPM. The region spanning 32-92 is the HTH myb-type domain; sequence TDPKPRLRWT…HLQKFRLGKQ (61 aa). The segment at residues 63 to 88 is a DNA-binding region (H-T-H motif); it reads PKTIMRVMGVKGLTLYHLKSHLQKFR. A coiled-coil region spans residues 127–171; it reads NMNEMQIEVQRRLHEQLEVQKHLQLRIEAQGKYMQSILEKAYQTL. Positions 139 to 144 match the LHEQLE motif; that stretch reads LHEQLE. The segment at 310 to 358 is disordered; the sequence is IYDSKPEEKKFDASMKLERPSPRRAPLGERMSPMITTGTMAQGRSSPFG. Basic and acidic residues predominate over residues 311–330; it reads YDSKPEEKKFDASMKLERPS. The span at 343–358 shows a compositional bias: polar residues; sequence MITTGTMAQGRSSPFG.

The protein belongs to the MYB-CC family. As to quaternary structure, interacts with NSP2. Expressed in leaves, stems, nodules and roots.

The protein resides in the nucleus. In terms of biological role, transcriptional regulator required for Nod-factor-induced gene expression. Transcription activator involved in the induction of NIN and ENOD40 genes, which are required for rhizobial infection and early nodule development. Possesses strong transactivation activity in vitro. Does not seem to contribute to the early steps of the arbuscular mycorrhizal fungus infection and colonization processes in roots. The sequence is that of Myb family transcription factor IPN2 from Lotus japonicus (Lotus corniculatus var. japonicus).